Here is a 422-residue protein sequence, read N- to C-terminus: 5-hydroxytryptamine receptor 1A (422 aa).

The segment at 1–23 (MDVLSPGQGNNTTSPPAPFETGG) is disordered. Topologically, residues 1-38 (MDVLSPGQGNNTTSPPAPFETGGNTTGISDVTFSYQVI) are extracellular. N-linked (GlcNAc...) asparagine glycosylation is found at N10, N11, and N24. A helical membrane pass occupies residues 39–59 (TSLLLGTLIFCAVLGNACVVA). The Cytoplasmic portion of the chain corresponds to 60 to 73 (AIALERSLQNVANY). Residues 74–98 (LIGSLAVTDLMVSVLVLPMAALYQV) form a helical membrane-spanning segment. The Extracellular portion of the chain corresponds to 99-107 (LNKWTLGQV). A helical membrane pass occupies residues 108–132 (TCDLFIALDVLCCTSSILHLCAIAL). A disulfide bridge connects residues C109 and C187. Residues D116 and C120 each contribute to the serotonin site. The DRY motif; important for ligand-induced conformation changes motif lies at 133–135 (DRY). Over 133–152 (DRYWAITDPIDYVNKRTPRR) the chain is Cytoplasmic. The chain crosses the membrane as a helical span at residues 153–174 (AAALISLTWLIGFLISIPPMLG). Over 175–193 (WRTPEDRSDPDACTISKDH) the chain is Extracellular. Residues 194–216 (GYTIYSTFGAFYIPLLLMLVLYG) form a helical membrane-spanning segment. Residues 217-346 (RIFRAARFRI…LARERKTVKT (130 aa)) are Cytoplasmic-facing. Residues 235–262 (KTGADTRHGASPAPQPKKSVNGESGSRN) form a disordered region. Positions 314, 345, 346, and 352 each coordinate 1D-myo-inositol 4-phosphate. Residues 347 to 370 (LGIIMGTFILCWLPFFIVALVLPF) traverse the membrane as a helical segment. At 371–378 (CESSCHMP) the chain is on the extracellular side. The helical transmembrane segment at 379-403 (TLLGAIINWLGYSNSLLNPVIYAYF) threads the bilayer. The NPxxY motif; important for ligand-induced conformation changes and signaling motif lies at 396 to 400 (NPVIY). Residues F403, N404, and K405 each coordinate 1D-myo-inositol 4-phosphate. Topologically, residues 404 to 422 (NKDFQNAFKKIIKCKFCRQ) are cytoplasmic.

It belongs to the G-protein coupled receptor 1 family. 5-hydroxytryptamine receptor subfamily. HTR1A sub-subfamily. Heterodimer; heterodimerizes with GPER1. Interacts with YIF1B. Interacts with GPR39 and GALR1.

It is found in the cell membrane. It localises to the cell projection. The protein localises to the dendrite. With respect to regulation, G-protein coupled receptor activity is regulated by lipids: phosphatidylinositol 4-phosphate increases HTR1A-mediated activity. Its function is as follows. G-protein coupled receptor for 5-hydroxytryptamine (serotonin). Also functions as a receptor for various drugs and psychoactive substances. Ligand binding causes a conformation change that triggers signaling via guanine nucleotide-binding proteins (G proteins) and modulates the activity of downstream effectors, such as adenylate cyclase. HTR1A is coupled to G(i)/G(o) G alpha proteins and mediates inhibitory neurotransmission: signaling inhibits adenylate cyclase activity and activates a phosphatidylinositol-calcium second messenger system that regulates the release of Ca(2+) ions from intracellular stores. Beta-arrestin family members regulate signaling by mediating both receptor desensitization and resensitization processes. The polypeptide is 5-hydroxytryptamine receptor 1A (HTR1A) (Gorilla gorilla gorilla (Western lowland gorilla)).